The primary structure comprises 158 residues: NAD(P)H-quinone oxidoreductase subunit J, chloroplastic (158 aa).

This sequence belongs to the complex I 30 kDa subunit family. In terms of assembly, NDH is composed of at least 16 different subunits, 5 of which are encoded in the nucleus.

It is found in the plastid. It localises to the chloroplast thylakoid membrane. It catalyses the reaction a plastoquinone + NADH + (n+1) H(+)(in) = a plastoquinol + NAD(+) + n H(+)(out). It carries out the reaction a plastoquinone + NADPH + (n+1) H(+)(in) = a plastoquinol + NADP(+) + n H(+)(out). Functionally, NDH shuttles electrons from NAD(P)H:plastoquinone, via FMN and iron-sulfur (Fe-S) centers, to quinones in the photosynthetic chain and possibly in a chloroplast respiratory chain. The immediate electron acceptor for the enzyme in this species is believed to be plastoquinone. Couples the redox reaction to proton translocation, and thus conserves the redox energy in a proton gradient. This is NAD(P)H-quinone oxidoreductase subunit J, chloroplastic from Amborella trichopoda.